We begin with the raw amino-acid sequence, 322 residues long: Arginase (322 aa).

His113, Asp141, His143, and Asp145 together coordinate Mn(2+). Substrate is bound by residues His143–Asn147, Ser154–Asn156, and Asp200. Positions 247 and 249 each coordinate Mn(2+). Thr261 and Glu292 together coordinate substrate.

The protein belongs to the arginase family. As to quaternary structure, homotrimer. Mn(2+) serves as cofactor.

The catalysed reaction is L-arginine + H2O = urea + L-ornithine. Its pathway is nitrogen metabolism; urea cycle; L-ornithine and urea from L-arginine: step 1/1. The protein is Arginase (ARG) of Coccidioides immitis (strain RS) (Valley fever fungus).